The sequence spans 453 residues: Phosphoglucosamine mutase (453 aa).

Ser-100 serves as the catalytic Phosphoserine intermediate. Residues Ser-100, Asp-239, Asp-241, and Asp-243 each coordinate Mg(2+). Ser-100 carries the post-translational modification Phosphoserine.

The protein belongs to the phosphohexose mutase family. Mg(2+) serves as cofactor. In terms of processing, activated by phosphorylation.

It carries out the reaction alpha-D-glucosamine 1-phosphate = D-glucosamine 6-phosphate. In terms of biological role, catalyzes the conversion of glucosamine-6-phosphate to glucosamine-1-phosphate. This chain is Phosphoglucosamine mutase, found in Buchnera aphidicola subsp. Baizongia pistaciae (strain Bp).